The primary structure comprises 309 residues: Sulfate adenylyltransferase subunit 2 (309 aa).

Belongs to the PAPS reductase family. CysD subfamily. As to quaternary structure, heterodimer composed of CysD, the smaller subunit, and CysN.

The enzyme catalyses sulfate + ATP + H(+) = adenosine 5'-phosphosulfate + diphosphate. It functions in the pathway sulfur metabolism; hydrogen sulfide biosynthesis; sulfite from sulfate: step 1/3. Functionally, with CysN forms the ATP sulfurylase (ATPS) that catalyzes the adenylation of sulfate producing adenosine 5'-phosphosulfate (APS) and diphosphate, the first enzymatic step in sulfur assimilation pathway. APS synthesis involves the formation of a high-energy phosphoric-sulfuric acid anhydride bond driven by GTP hydrolysis by CysN coupled to ATP hydrolysis by CysD. The sequence is that of Sulfate adenylyltransferase subunit 2 from Mycolicibacterium gilvum (strain PYR-GCK) (Mycobacterium gilvum (strain PYR-GCK)).